A 216-amino-acid chain; its full sequence is uncharacterized protein (216 aa).

This is an uncharacterized protein from Archaeoglobus fulgidus (strain ATCC 49558 / DSM 4304 / JCM 9628 / NBRC 100126 / VC-16).